The sequence spans 437 residues: Transcriptional modulator WTM1 (437 aa).

The WD 1 repeat unit spans residues 103-144; the sequence is YQGETVSKMAYLDKTGETTLLSMSKNGSLAWFKEGIKVPIHI. Thr-187 carries the post-translational modification Phosphothreonine. Ser-200 is subject to Phosphoserine. 3 WD repeats span residues 221-259, 264-304, and 326-366; these read PGTT…KPIW, PKNG…AATT, and AGGD…SKYN. The interval 368 to 404 is disordered; it reads DDTIAPPQDATEESQTKSLRFLHKGGSRRSPKQIGRR. Thr-370 carries the phosphothreonine modification. The span at 387 to 402 shows a compositional bias: basic residues; the sequence is RFLHKGGSRRSPKQIG. At Thr-406 the chain carries Phosphothreonine.

Interacts with KAP122.

It is found in the cytoplasm. It localises to the nucleus. Its function is as follows. Transcriptional modulator with roles in meiotic regulation and silencing. Acts either as an adapter to facilitate nuclear import by KAP122 of the RNR2-RNR4 heterodimer, also called beta-beta' subunit, which corresponds to the small subunit of the ribonucleotide reductase (RNR); or as an anchor to retain RNR2-RNR4 in the nucleus. This is Transcriptional modulator WTM1 (WTM1) from Saccharomyces cerevisiae (strain ATCC 204508 / S288c) (Baker's yeast).